The sequence spans 207 residues: Ras-related protein Rab-8A (207 aa).

The GTP site is built by S17, G18, V19, G20, K21, T22, C23, S35, S39, and T40. Residue T22 coordinates Mg(2+). Short sequence motifs (switch) lie at residues 31–45 and 63–80; these read DAFN…GIDF and DTAG…YYRG. Positions 40 and 63 each coordinate Mg(2+). G66 is a GTP binding site. T72 carries the phosphothreonine modification. GTP contacts are provided by N121, K122, D124, A152, and K153. Residues S181 and S185 each carry the phosphoserine modification. C204 is subject to Cysteine methyl ester. Residue C204 is the site of S-geranylgeranyl cysteine attachment. The propeptide at 205–207 is removed in mature form; it reads VLL.

This sequence belongs to the small GTPase superfamily. Rab family. As to quaternary structure, interacts (GTP-bound form) with MICALL1; regulates RAB8A association with recycling endosomes. Interacts with MICALL2; competes with RAB13 and is involved in E-cadherin endocytic recycling. Interacts (GTP-bound form) with MICAL1, MICALCL, MICAL3, EHBP1 and EHBP1L1; at least in case of MICAL1, MICALCL, MICAL3 and EHBP1L1 two molecules of RAB8A can bind to one molecule of the effector protein; ternary complexes of RAB8A, RAB13 and either MICAL1 or EHBP1L1 are possible. Interacts with EHD1. Interacts with MAP4K2 and SYTL4. Interacts with SGSM1 and SGSM3. Interacts with RABIF, RIMS2, RPH3A and RPH3A. Interacts with OPTN. Interacts with RAB3IP, RAB3IP functions as guanine exchange factor (GEF). Interacts with MYO5B. Interacts with CIMAP3. Interacts with BIRC6/bruce. Interacts with OCRL. Interacts with AHI1. Interacts with DCDC1. Interacts with LRRK2; interaction facilitates phosphorylation of Thr-72. Interacts with RAB31P, GDI1, GDI2, CHM, CHML, RABGGTA, RABGGTB, TBC1D15 and INPP5B; these interactions are dependent on Thr-72 not being phosphorylated. Interacts with RILPL1 and RILPL2; these interactions are dependent on the phosphorylation of Thr-72 by LRRK2. Interacts with DZIP1; prevents inhibition by the GDP-dissociation inhibitor GDI2. Interacts (in GDP-bound form) with RAB3IP/Rabin8, RAB3IP functions as guanine exchange factor (GEF) towards RAB8A. Interacts (in GDP-bound form) with RPGR, RPGR functions as GEF towards RAB8A. The cofactor is Mg(2+). Phosphorylation of Thr-72 in the switch II region by LRRK2 prevents the association of RAB regulatory proteins, including CHM, CHML and RAB GDP dissociation inhibitors GDI1 and GDI2. Phosphorylation by LRRK2 is required for localization to stressed lysosomes.

Its subcellular location is the cell membrane. The protein resides in the golgi apparatus. The protein localises to the endosome membrane. It localises to the recycling endosome membrane. It is found in the cell projection. Its subcellular location is the cilium. The protein resides in the cytoplasmic vesicle. The protein localises to the phagosome membrane. It localises to the cytoplasm. It is found in the cytoskeleton. Its subcellular location is the microtubule organizing center. The protein resides in the centrosome. The protein localises to the centriole. It localises to the cilium basal body. It is found in the midbody. Its subcellular location is the lysosome. The catalysed reaction is GTP + H2O = GDP + phosphate + H(+). Regulated by guanine nucleotide exchange factors (GEFs) such as RAB3IP/Rabin8 and RPGR which promote the exchange of bound GDP for free GTP, GTPase activating proteins (GAPs) which increase the GTP hydrolysis activity, and GDP dissociation inhibitors (GDIs) which inhibit the dissociation of the nucleotide from the GTPase. Activated in response to insulin. The small GTPases Rab are key regulators of intracellular membrane trafficking, from the formation of transport vesicles to their fusion with membranes. Rabs cycle between an inactive GDP-bound form and an active GTP-bound form that is able to recruit to membranes different sets of downstream effectors directly responsible for vesicle formation, movement, tethering and fusion. RAB8A is involved in polarized vesicular trafficking and neurotransmitter release. Together with RAB11A, RAB3IP, the exocyst complex, PARD3, PRKCI, ANXA2, CDC42 and DNMBP promotes transcytosis of PODXL to the apical membrane initiation sites (AMIS), apical surface formation and lumenogenesis. Regulates the compacted morphology of the Golgi. Together with MYO5B and RAB11A participates in epithelial cell polarization. Also involved in membrane trafficking to the cilium and ciliogenesis. Together with MICALL2, may also regulate adherens junction assembly. May play a role in insulin-induced transport to the plasma membrane of the glucose transporter GLUT4 and therefore play a role in glucose homeostasis. Involved in autophagy. Participates in the export of a subset of neosynthesized proteins through a Rab8-Rab10-Rab11-dependent endososomal export route. Targeted to and stabilized on stressed lysosomes through LRRK2 phosphorylation. Suppresses stress-induced lysosomal enlargement through EHBP1 and EHNP1L1 effector proteins. In Pongo abelii (Sumatran orangutan), this protein is Ras-related protein Rab-8A (RAB8A).